We begin with the raw amino-acid sequence, 118 residues long: Ly-6/neurotoxin-like protein 1 (118 aa).

Residues 1–22 (MTPLLTLFLVVLMGLPLAPVQA) form the signal peptide. The UPAR/Ly6 domain maps to 23 to 107 (LDCHVCAYNG…LAIPATLALA (85 aa)). 5 cysteine pairs are disulfide-bonded: cysteine 25–cysteine 48, cysteine 28–cysteine 35, cysteine 41–cysteine 66, cysteine 70–cysteine 87, and cysteine 88–cysteine 93. A lipid anchor (GPI-anchor amidated serine) is attached at serine 95. Residues 96 to 118 (AGLAIPATLALAPVLLATLWGLL) constitute a propeptide, removed in mature form.

In terms of assembly, interacts with nAChRs containing alpha-4:beta-2 (CHRNA4:CHRNB2) and alpha-7 (CHRNA7) subunits. Interacts with CHRNA4 probably in the endoplasmic reticulum prior to nAChR pentameric assembly. Interacts with KCNA2/Potassium voltage-gated channel subfamily A member 2. In terms of tissue distribution, expressed in lung predominantly in airway epithelial cells, submucous glands, and smooth muscle cells, in endothelial and smooth muscle cells in vessel walls and in alveolar type II cells (at protein level). Also expressed in brain.

It is found in the cell membrane. Its subcellular location is the cell projection. The protein localises to the dendrite. It localises to the endoplasmic reticulum. Functionally, acts in different tissues through interaction to nicotinic acetylcholine receptors (nAChRs). The proposed role as modulator of nAChR activity seems to be dependent on the nAChR subtype and stoichiometry, and to involve an effect on nAChR trafficking and its cell surface expression, and on single channel properties of the nAChR inserted in the plasma membrane. Modulates functional properties of nicotinic acetylcholine receptors (nAChRs) to prevent excessive excitation, and hence neurodegeneration. Enhances desensitization by increasing both the rate and extent of desensitization of alpha-4:beta-2-containing nAChRs and slowing recovery from desensitization. Promotes large amplitude ACh-evoked currents through alpha-4:beta-2 nAChRs. Is involved in regulation of the nAChR pentameric assembly in the endoplasmic reticulum. Shifts stoichiometry from high sensitivity alpha-4(2):beta-2(3) to low sensitivity alpha-4(3):beta-2(2) nAChR. In vitro modulates alpha-3:beta-4-containing nAChRs. Reduces cell surface expression of (alpha-3:beta-4)(2):beta-4 and (alpha-3:beta-4)(2):alpha-5 nAChRs suggesting an interaction with nAChR alpha-3(-):(+)beta-4 subunit interfaces and an allosteric mode. Corresponding single channel effects characterized by decreased unitary conductance, altered burst proportions and enhanced desensitization/inactivation seem to depend on nAChR alpha:alpha subunit interfaces and are greater in (alpha-3:beta-2)(2):alpha-3 when compared to (alpha-3:beta-2)(2):alpha-5 nAChRs. Prevents plasticity in the primary visual cortex late in life. This is Ly-6/neurotoxin-like protein 1 from Macaca mulatta (Rhesus macaque).